The primary structure comprises 231 residues: NADH-ubiquinone oxidoreductase chain 4 (231 aa).

6 consecutive transmembrane segments (helical) span residues 1-21 (PIAG…YGMI), 34-54 (MFMP…LTCL), 63-85 (IAYS…TPWG), 89-111 (AMAL…NTTY), 128-148 (ILPM…AIPP), and 156-176 (FLIM…LGLS).

This sequence belongs to the complex I subunit 4 family.

It is found in the mitochondrion membrane. The enzyme catalyses a ubiquinone + NADH + 5 H(+)(in) = a ubiquinol + NAD(+) + 4 H(+)(out). Its function is as follows. Core subunit of the mitochondrial membrane respiratory chain NADH dehydrogenase (Complex I) that is believed to belong to the minimal assembly required for catalysis. Complex I functions in the transfer of electrons from NADH to the respiratory chain. The immediate electron acceptor for the enzyme is believed to be ubiquinone. This chain is NADH-ubiquinone oxidoreductase chain 4 (MT-ND4), found in Bothriechis schlegelii (Eyelash palm pitviper).